The chain runs to 381 residues: MDVEHHKSGHISRPTVDIPPRKLLSSAKSPSSVSSPLRDYKEQKDYCYDSDSEDPYAGDHFRMYEFKIRRCTRSRSHDWTDCPFSHPGEKARRRDPRRFHYTGEVCPEFSRHGDCSRGDECGFAHGVFECWLHPSRYRTEACKDGKHCKRKVCFFAHSPRQLRVLPPSPENHISGGCGGSPSSSPASVLSNKNNRCCLFCSHSPTSTLLNLSRSPSSSPPLSPADKADAFSRLSRRRTAVLNELISSLDSLSLTEALAASSSSPVTMPISTATMIASSNLSSNHHHHRLPPWLDVGDRDLQLQQSSPLRFALSPSSTPSYLHGQLQPPPSSFFGDEFTPRGGRLSDFSVAAAAAAQARDKNSFEVGSSGDLDLGWVNDLLT.

A disordered region spans residues 1–39; it reads MDVEHHKSGHISRPTVDIPPRKLLSSAKSPSSVSSPLRD. Residues 21 to 37 are compositionally biased toward low complexity; the sequence is RKLLSSAKSPSSVSSPL. C3H1-type zinc fingers lie at residues 101–128 and 137–159; these read YTGEVCPEFSRHGDCSRGDECGFAHGVF and YRTEACKDGKHCKRKVCFFAHSP.

Interacts with MARD1/FLZ9 and RD21A via its CCCH zing finger domains.

It is found in the cytoplasm. The protein resides in the stress granule. The protein localises to the P-body. In Arabidopsis thaliana (Mouse-ear cress), this protein is Zinc finger CCCH domain-containing protein 61.